The following is a 109-amino-acid chain: Larval cuticle protein 1 (109 aa).

The N-terminal stretch at 1-14 (MILVALALVALAVA) is a signal peptide. Residues 34–107 (EGSYQFGFET…AEGSSIPKPA (74 aa)) enclose the Chitin-binding type R&amp;R domain.

In terms of biological role, component of the cuticle of the larva of Helicoverpa armigera. In Helicoverpa armigera (Cotton bollworm), this protein is Larval cuticle protein 1 (LCP1).